Reading from the N-terminus, the 821-residue chain is PX domain-containing protein C1450.12 (821 aa).

Residues 171 to 310 (AYVLGVRQST…SFLTDDPVTL (140 aa)) form the PX domain. The disordered stretch occupies residues 235–271 (KDDHDTYLNSSEDSTLSPLPSRSSDTNDPQSDSQHVL). Polar residues predominate over residues 241–268 (YLNSSEDSTLSPLPSRSSDTNDPQSDSQ). A phosphothreonine mark is found at T260 and T597. Acidic residues-rich tracts occupy residues 737 to 746 (GDEDDQDEND) and 754 to 766 (EHME…EEFD). The interval 737–766 (GDEDDQDENDQVTKVEEEHMEDDDSVEEFD) is disordered. Residue S761 is modified to Phosphoserine.

It localises to the mitochondrion membrane. In Schizosaccharomyces pombe (strain 972 / ATCC 24843) (Fission yeast), this protein is PX domain-containing protein C1450.12.